A 382-amino-acid polypeptide reads, in one-letter code: Probable protein phosphatase 2C 65 (382 aa).

Residues 47-337 (HVSMSIKQGK…DDCAVVVLYL (291 aa)) form the PPM-type phosphatase domain. Residues aspartate 83 and glycine 84 each coordinate Mn(2+). A disordered region spans residues 107-126 (KIRSSKSAGDENIENNSSQS). Mn(2+) contacts are provided by aspartate 282 and aspartate 328.

It belongs to the PP2C family. It depends on Mg(2+) as a cofactor. The cofactor is Mn(2+).

The catalysed reaction is O-phospho-L-seryl-[protein] + H2O = L-seryl-[protein] + phosphate. It carries out the reaction O-phospho-L-threonyl-[protein] + H2O = L-threonyl-[protein] + phosphate. The polypeptide is Probable protein phosphatase 2C 65 (Arabidopsis thaliana (Mouse-ear cress)).